The primary structure comprises 206 residues: Small ribosomal subunit protein uS4 (206 aa).

The S4 RNA-binding domain maps to 96 to 156 (GRLDNVVYRM…EKAKKQARIK (61 aa)).

It belongs to the universal ribosomal protein uS4 family. In terms of assembly, part of the 30S ribosomal subunit. Contacts protein S5. The interaction surface between S4 and S5 is involved in control of translational fidelity.

In terms of biological role, one of the primary rRNA binding proteins, it binds directly to 16S rRNA where it nucleates assembly of the body of the 30S subunit. Functionally, with S5 and S12 plays an important role in translational accuracy. In Tolumonas auensis (strain DSM 9187 / NBRC 110442 / TA 4), this protein is Small ribosomal subunit protein uS4.